The sequence spans 220 residues: Transcriptional regulatory protein SpaR (220 aa).

Residues 3 to 115 form the Response regulatory domain; the sequence is KILAVDDEKD…ELSARVNAHL (113 aa). 4-aspartylphosphate is present on aspartate 51. Positions 124–220 form a DNA-binding region, ompR/PhoB-type; sequence QSKRVISGFL…TVWGVGYKWE (97 aa).

In terms of processing, phosphorylated by SpaK.

It localises to the cytoplasm. Member of the two-component regulatory system SpaK/SpaR involved in the regulation of the biosynthesis of lantibiotic subtilin. SpaR may function as a regulatory protein. The polypeptide is Transcriptional regulatory protein SpaR (spaR) (Bacillus subtilis).